Reading from the N-terminus, the 459-residue chain is MLRWLIGGGREPQGLAEKSPLQTIGEEQTQNPYTELLVLKAHHDIVRFLVQLDDYRFASAGDDGIVVVWNAQTGEKLLELNGHTQKITAIITFPSLESCEEKNQLILTASADRTVIVWDGDTTRQVQRISCFQSTVKCLTVLQRLDVWLSGGNDLCVWNRKLDLLCKTSHLSDTGISALVEIPKNCVVAAVGKELIIFRLVAPTEGSLEWDILEVKRLLDHQDNILSLINVNDLSFVTGSHVGELIIWDALDWTMQAYERNFWDPSPQLDTQQEIKLCQKSNDISIHHFTCDEENVFAAVGRGLYVYSLQMKRVIACQKTAHDSNVLHVARLPNRQLISCSEDGSVRIWELREKQQLAAEPVPTGFFNMWGFGRVSKQASQPVKKQQENATSCSLELIGDLIGHSSSVEMFLYFEDHGLVTCSADHLIILWKNGERESGLRSLRLFQKLEENGDLYLAV.

WD repeat units lie at residues 40–79 (KAHH…KLLE), 82–128 (GHTQ…QVQR), 131–168 (CFQS…LCKT), 220–258 (DHQD…MQAY), 321–359 (AHDS…QLAA), and 403–441 (GHSS…SGLR).

In terms of assembly, component of the C9orf72-SMCR8 complex, at least composed of C9orf72, SMCR8 and WDR41. The complex is formed of two protomers, each individually consisting of one molecule each of C9orf72, SMCR8 and WDR41. The protomers homodimerize via an interaction between C9orf72 (via C-terminus) and SMCR8 (via N-terminus). Within each protomer SMCR8 (via DENN domain) acts as a bridging protein between WDR41 (via C-terminus and N-terminus) and C9orf72 (via C-terminus). The C9orf72-SMCR8 complex associates with the ULK1/ATG1 kinase complex.

The protein resides in the cytoplasm. Non-catalytic component of the C9orf72-SMCR8 complex, a complex that has guanine nucleotide exchange factor (GEF) activity and regulates autophagy. The C9orf72-SMCR8 complex promotes the exchange of GDP to GTP, converting inactive GDP-bound RAB8A and RAB39B into their active GTP-bound form, thereby promoting autophagosome maturation. As part of the C9orf72-SMCR8 complex, stimulates RAB8A and RAB11A GTPase activity in vitro, however WDR42 is shown not be an essential complex component for this function. The C9orf72-SMCR8 complex also acts as a negative regulator of autophagy initiation by interacting with the ULK1/ATG1 kinase complex and inhibiting its protein kinase activity. This is WD repeat-containing protein 41 from Homo sapiens (Human).